The chain runs to 297 residues: Phosphoribosylaminoimidazole-succinocarboxamide synthase (297 aa).

This sequence belongs to the SAICAR synthetase family.

The catalysed reaction is 5-amino-1-(5-phospho-D-ribosyl)imidazole-4-carboxylate + L-aspartate + ATP = (2S)-2-[5-amino-1-(5-phospho-beta-D-ribosyl)imidazole-4-carboxamido]succinate + ADP + phosphate + 2 H(+). It participates in purine metabolism; IMP biosynthesis via de novo pathway; 5-amino-1-(5-phospho-D-ribosyl)imidazole-4-carboxamide from 5-amino-1-(5-phospho-D-ribosyl)imidazole-4-carboxylate: step 1/2. The sequence is that of Phosphoribosylaminoimidazole-succinocarboxamide synthase from Methylobacillus flagellatus (strain ATCC 51484 / DSM 6875 / VKM B-1610 / KT).